Consider the following 367-residue polypeptide: Anhydro-N-acetylmuramic acid kinase (367 aa).

Position 11 to 18 (11 to 18 (GTSLDGVD)) interacts with ATP.

Belongs to the anhydro-N-acetylmuramic acid kinase family.

The catalysed reaction is 1,6-anhydro-N-acetyl-beta-muramate + ATP + H2O = N-acetyl-D-muramate 6-phosphate + ADP + H(+). Its pathway is amino-sugar metabolism; 1,6-anhydro-N-acetylmuramate degradation. The protein operates within cell wall biogenesis; peptidoglycan recycling. In terms of biological role, catalyzes the specific phosphorylation of 1,6-anhydro-N-acetylmuramic acid (anhMurNAc) with the simultaneous cleavage of the 1,6-anhydro ring, generating MurNAc-6-P. Is required for the utilization of anhMurNAc either imported from the medium or derived from its own cell wall murein, and thus plays a role in cell wall recycling. This Rhodopseudomonas palustris (strain HaA2) protein is Anhydro-N-acetylmuramic acid kinase.